Here is a 134-residue protein sequence, read N- to C-terminus: Profilin-2 (134 aa).

A disulfide bridge connects residues Cys13 and Cys118. The short motif at 84–100 (AVIRGKKGSGGITIKKT) is the Involved in PIP2 interaction element. Thr114 bears the Phosphothreonine mark.

This sequence belongs to the profilin family. Occurs in many kinds of cells as a complex with monomeric actin in a 1:1 ratio. In terms of processing, phosphorylated by MAP kinases.

It localises to the cytoplasm. It is found in the cytoskeleton. Binds to actin and affects the structure of the cytoskeleton. At high concentrations, profilin prevents the polymerization of actin, whereas it enhances it at low concentrations. The chain is Profilin-2 from Olea europaea (Common olive).